A 105-amino-acid chain; its full sequence is UPF0060 membrane protein Rmet_4032 (105 aa).

The next 4 membrane-spanning stretches (helical) occupy residues 4–24, 28–48, 60–80, and 82–102; these read VGLYLLTALAEILGCYLPYLW, GASPWVLLPGAASLAVFAWLL, AAYGGVYIAMAIAWLWAVDGV, and PSPWDIAGVAVALGGMAIIVF.

Belongs to the UPF0060 family.

It localises to the cell inner membrane. The chain is UPF0060 membrane protein Rmet_4032 from Cupriavidus metallidurans (strain ATCC 43123 / DSM 2839 / NBRC 102507 / CH34) (Ralstonia metallidurans).